The sequence spans 306 residues: Bacitracin transport ATP-binding protein BcrA (306 aa).

The ABC transporter domain maps to 5–233 (IKTTDLTKMY…NRKYLEFQLS (229 aa)). 37-44 (GRNGAGKT) contributes to the ATP binding site.

Belongs to the ABC transporter superfamily.

In terms of biological role, part of the binding-protein-dependent transport system for bacitracin that confer resistance to this antibiotic. Probably responsible for energy coupling to the transport system. The protein is Bacitracin transport ATP-binding protein BcrA (bcrA) of Bacillus licheniformis.